Here is a 1448-residue protein sequence, read N- to C-terminus: ABC transporter G family member 9 (1448 aa).

Positions 16-28 (EGGSNLNINTPSG) are enriched in polar residues. A disordered region spans residues 16 to 41 (EGGSNLNINTPSGMSDGDFNSGANSP). In terms of domain architecture, ABC transporter 1 spans 136-385 (LFKPSTWKIE…FLDLGFDCEP (250 aa)). The 228-residue stretch at 490-717 (WGDKFSLVSR…APYDNSVRVC (228 aa)) folds into the ABC transmembrane type-2 1 domain. The next 7 membrane-spanning stretches (helical) occupy residues 494–514 (FSLV…GSVF), 530–550 (AIFA…FATF), 579–599 (IPLT…MFGL), 604–624 (GKFF…TNMF), 634–654 (LYVS…YCGY), 663–683 (PWFG…ALMA), and 748–768 (LNIF…MVAV). Positions 822–1066 (FTWENIKYTV…LTSYFERQGV (245 aa)) constitute an ABC transporter 2 domain. 858–865 (GSSGAGKT) serves as a coordination point for ATP. A run of 6 helical transmembrane segments spans residues 1157–1177 (FYAY…GFTF), 1191–1211 (IFFI…VMVQ), 1233–1253 (FAIS…SVFF), 1272–1292 (FYFW…GGAI), 1299–1319 (MFLA…FCGV), and 1422–1442 (IAIL…FVYL). Residues 1157-1389 (FYAYGSILQA…VPATGYVTNT (233 aa)) enclose the ABC transmembrane type-2 2 domain.

This sequence belongs to the ABC transporter superfamily. ABCG family. PDR (TC 3.A.1.205) subfamily.

The protein localises to the membrane. The sequence is that of ABC transporter G family member 9 (abcG9) from Dictyostelium discoideum (Social amoeba).